A 317-amino-acid polypeptide reads, in one-letter code: Transaldolase (317 aa).

K126 (schiff-base intermediate with substrate) is an active-site residue.

This sequence belongs to the transaldolase family. Type 1 subfamily. As to quaternary structure, homodimer.

It localises to the cytoplasm. The enzyme catalyses D-sedoheptulose 7-phosphate + D-glyceraldehyde 3-phosphate = D-erythrose 4-phosphate + beta-D-fructose 6-phosphate. The protein operates within carbohydrate degradation; pentose phosphate pathway; D-glyceraldehyde 3-phosphate and beta-D-fructose 6-phosphate from D-ribose 5-phosphate and D-xylulose 5-phosphate (non-oxidative stage): step 2/3. Functionally, transaldolase is important for the balance of metabolites in the pentose-phosphate pathway. This is Transaldolase from Burkholderia mallei (strain SAVP1).